A 325-amino-acid polypeptide reads, in one-letter code: Elongation factor P--(R)-beta-lysine ligase (325 aa).

76–78 contributes to the substrate binding site; sequence SPE. ATP contacts are provided by residues 100–102 and N109; that span reads RNE. Y118 is a binding site for substrate. Residue 244 to 245 participates in ATP binding; the sequence is EL. E251 contacts substrate. G300 is a binding site for ATP.

Belongs to the class-II aminoacyl-tRNA synthetase family. EpmA subfamily. As to quaternary structure, homodimer.

The catalysed reaction is D-beta-lysine + L-lysyl-[protein] + ATP = N(6)-((3R)-3,6-diaminohexanoyl)-L-lysyl-[protein] + AMP + diphosphate + H(+). With EpmB is involved in the beta-lysylation step of the post-translational modification of translation elongation factor P (EF-P). Catalyzes the ATP-dependent activation of (R)-beta-lysine produced by EpmB, forming a lysyl-adenylate, from which the beta-lysyl moiety is then transferred to the epsilon-amino group of a conserved specific lysine residue in EF-P. The sequence is that of Elongation factor P--(R)-beta-lysine ligase from Sodalis glossinidius (strain morsitans).